A 237-amino-acid polypeptide reads, in one-letter code: Myelin protein zero-like protein 3 (237 aa).

Positions 1-32 (MQLARGTVGGRGCALFPLLSILVVQGARIVLS) are cleaved as a signal peptide. Positions 33 to 149 (LEISADAHVR…NIPLTELTVT (117 aa)) constitute an Ig-like V-type domain. Residues 33 to 159 (LEISADAHVR…ERGFGTMLSS (127 aa)) are Extracellular-facing. Residues C53 and C129 are joined by a disulfide bond. An N-linked (GlcNAc...) asparagine glycan is attached at N124. Residues 160–180 (VALLSILVFVPSAVVVILLLV) traverse the membrane as a helical segment. Topologically, residues 181 to 237 (RMGRKATGVQKRSRSGYKKSSIEVSDDTDQEDSNDCMTRLCVRCAECLDSDYEEEAY) are cytoplasmic.

The protein belongs to the myelin P0 protein family. Present in all tissues tested, including the skin. Present in the keratinocytes and sebocytes in the skin (at protein level).

It is found in the membrane. Mediates homophilic cell-cell adhesion. The polypeptide is Myelin protein zero-like protein 3 (Mpzl3) (Mus musculus (Mouse)).